A 1253-amino-acid polypeptide reads, in one-letter code: Cytoplasmic FMR1-interacting protein 2 (1253 aa).

K1037 is modified (N6-acetyllysine).

The protein belongs to the CYFIP family. In terms of assembly, component of the WAVE1 complex composed of ABI2, CYFIP2, BRK1, NCKAP1 and WASF1/WAVE1. Interacts with RAC1 (activated form) which causes the complex to dissociate, releasing activated WASF1. The complex can also be activated by NCK1. Interacts with SHANK3; the interaction mediates the association of SHANK3 with the WAVE1 complex. Interacts with FMR1; the interaction occurs in a RNA-dependent manner. Interacts with FXR1 and FXR2. Interacts with TMEM108 (via N-terminus); the interaction associates TMEM108 with the WAVE1 complex.

The protein resides in the cytoplasm. The protein localises to the nucleus. It is found in the perinuclear region. Its subcellular location is the synapse. It localises to the synaptosome. In terms of biological role, involved in T-cell adhesion and p53-dependent induction of apoptosis. Does not bind RNA. As component of the WAVE1 complex, required for BDNF-NTRK2 endocytic trafficking and signaling from early endosomes. In Pongo abelii (Sumatran orangutan), this protein is Cytoplasmic FMR1-interacting protein 2.